The primary structure comprises 182 residues: Large ribosomal subunit protein uL6 (182 aa).

This sequence belongs to the universal ribosomal protein uL6 family. As to quaternary structure, part of the 50S ribosomal subunit.

Functionally, this protein binds to the 23S rRNA, and is important in its secondary structure. It is located near the subunit interface in the base of the L7/L12 stalk, and near the tRNA binding site of the peptidyltransferase center. In Nostoc punctiforme (strain ATCC 29133 / PCC 73102), this protein is Large ribosomal subunit protein uL6.